Here is a 414-residue protein sequence, read N- to C-terminus: Putative F-box/kelch-repeat protein At1g20940 (414 aa).

One can recognise an F-box domain in the interval 13 to 65 (SSIINDLPLDLLDEILFRLEPKSMAMMRCTNNSIKSYLSDPRFGPEYPSWVRP). 2 Kelch repeats span residues 281–328 (LTLI…MYDG) and 331–378 (LVVR…KLTP).

As to quaternary structure, interacts with DEK3.

Its pathway is protein modification; protein ubiquitination. Its function is as follows. Probable component of an E3 ubiquitin ligase complex. The polypeptide is Putative F-box/kelch-repeat protein At1g20940 (Arabidopsis thaliana (Mouse-ear cress)).